The sequence spans 321 residues: Cytochrome c biogenesis protein CcsA (321 aa).

A run of 8 helical transmembrane segments spans residues 12-32 (HISF…LLVY), 45-62 (MIAT…RWIS), 71-91 (LYES…ILYI), 98-117 (LNAI…TSGL), 143-163 (MLLS…LIVI), 227-247 (VISL…VWAN), 260-277 (ETWA…LHTR), and 292-312 (VASI…LLGI).

It belongs to the CcmF/CycK/Ccl1/NrfE/CcsA family. As to quaternary structure, may interact with Ccs1.

The protein localises to the plastid. It is found in the chloroplast thylakoid membrane. Functionally, required during biogenesis of c-type cytochromes (cytochrome c6 and cytochrome f) at the step of heme attachment. This is Cytochrome c biogenesis protein CcsA from Phalaenopsis aphrodite subsp. formosana (Moth orchid).